We begin with the raw amino-acid sequence, 714 residues long: Zinc finger matrin-type protein 1 (714 aa).

The Matrin-type 1 zinc finger occupies 89–119 (NFCKPCGVVLQHESERISHFESEIHAQNVKF). A disordered region spans residues 172–214 (HYVGKSHSPTQNQSLEEHDQVSPSTCSPKMDEPNTTPAPPPFL). The Matrin-type 2 zinc finger occupies 230 to 254 (YVCHICSITFTSLHMFRSHMQGTEH). Basic and acidic residues predominate over residues 417-434 (RERVDSEHRQRPCEERFS). Disordered regions lie at residues 417–469 (RERV…NDDF) and 571–714 (MPAS…ILGF). Composition is skewed to polar residues over residues 437 to 446 (APQTYQQEYS) and 575 to 588 (LSLSQQEDNPSSYN). The span at 609 to 619 (SHRRRRQKRKR) shows a compositional bias: basic residues. 2 stretches are compositionally biased toward basic and acidic residues: residues 620–632 (HLEEGKERPEKEQ) and 640–662 (SYQDKDLDKDKLIKQSKREEDKA). The span at 669-678 (TKHRRKKRKH) shows a compositional bias: basic residues.

The protein resides in the nucleus. The chain is Zinc finger matrin-type protein 1 (Zmat1) from Mus musculus (Mouse).